Reading from the N-terminus, the 646-residue chain is Threonine--tRNA ligase (646 aa).

In terms of domain architecture, TGS spans 1 to 61; that stretch reads MIKITFPDGS…NEDADFVLYK (61 aa). The tract at residues 242-541 is catalytic; sequence DHRKIGKEMQ…LIEHTAGKFP (300 aa). Zn(2+) contacts are provided by C337, H388, and H518.

This sequence belongs to the class-II aminoacyl-tRNA synthetase family. Homodimer. Zn(2+) serves as cofactor.

It localises to the cytoplasm. The enzyme catalyses tRNA(Thr) + L-threonine + ATP = L-threonyl-tRNA(Thr) + AMP + diphosphate + H(+). In terms of biological role, catalyzes the attachment of threonine to tRNA(Thr) in a two-step reaction: L-threonine is first activated by ATP to form Thr-AMP and then transferred to the acceptor end of tRNA(Thr). Also edits incorrectly charged L-seryl-tRNA(Thr). The protein is Threonine--tRNA ligase of Bacteroides thetaiotaomicron (strain ATCC 29148 / DSM 2079 / JCM 5827 / CCUG 10774 / NCTC 10582 / VPI-5482 / E50).